Here is a 628-residue protein sequence, read N- to C-terminus: Forkhead box protein O (628 aa).

Threonine 50 carries the post-translational modification Phosphothreonine; by PKB/AKT1. Serine 81 is subject to Phosphoserine. The fork-head DNA-binding region spans 101 to 207 (WGNLSYADLI…ETSRYEKRRG (107 aa)). 2 disordered regions span residues 188–210 (KSVR…GRAK) and 223–270 (GLND…SSCG). Serine 196 bears the Phosphoserine; by PKB/AKT1 mark. Polar residues-rich tracts occupy residues 227-236 (ATPSPSSSVS) and 261-270 (RASSNASSCG). Serine 264 bears the Phosphoserine; by PKB/AKT1 mark. Residues serine 267, serine 268, and serine 273 each carry the phosphoserine modification. 2 disordered regions span residues 327–373 (SAAS…SLQP) and 398–451 (NSVT…QQQQ). Over residues 334–343 (TQPPPPPYPA) the composition is skewed to pro residues. Residues 344–359 (PQQQQQQQPQQQQAYT) are compositionally biased toward low complexity. Over residues 411–423 (SEPSSDSLNTYSN) the composition is skewed to polar residues. The span at 438 to 451 (QQQRQQQQQQQQQQ) shows a compositional bias: low complexity.

In terms of assembly, interacts with melt.

The protein localises to the cytoplasm. The protein resides in the nucleus. Functionally, transcription factor involved in the regulation of the insulin signaling pathway. Consistently activates both the downstream target Thor\d4EBP and the feedback control target InR. Involved in negative regulation of the cell cycle, modulating cell growth and proliferation. In response to cellular stresses, such as nutrient deprivation or increased levels of reactive oxygen species, foxo is activated and inhibits growth through the action of target genes such as Thor. Foxo activated in the adult fat body can regulate lifespan in adults; an insulin peptide itself may function as one secondary messenger of insulin-regulated aging. Also regulates Lip4, homolog of human acid lipases, thereby acting as a key modulator of lipid metabolism by insulin signaling and integrates insulin responses to glucose and lipid homeostasis. The chain is Forkhead box protein O from Drosophila willistoni (Fruit fly).